The following is a 60-amino-acid chain: Large ribosomal subunit protein bL32c (60 aa).

The protein belongs to the bacterial ribosomal protein bL32 family.

It is found in the plastid. Its subcellular location is the chloroplast. In Psilotum nudum (Whisk fern), this protein is Large ribosomal subunit protein bL32c.